Reading from the N-terminus, the 124-residue chain is Putative iron-sulfur cluster insertion protein ErpA 2 (124 aa).

Iron-sulfur cluster-binding residues include cysteine 52, cysteine 116, and cysteine 118.

This sequence belongs to the HesB/IscA family. In terms of assembly, homodimer. Iron-sulfur cluster is required as a cofactor.

In terms of biological role, required for insertion of 4Fe-4S clusters. The polypeptide is Putative iron-sulfur cluster insertion protein ErpA 2 (Burkholderia vietnamiensis (strain G4 / LMG 22486) (Burkholderia cepacia (strain R1808))).